Reading from the N-terminus, the 401-residue chain is Imidazolonepropionase (401 aa).

Positions 70 and 72 each coordinate Fe(3+). Residues H70 and H72 each coordinate Zn(2+). 3 residues coordinate 4-imidazolone-5-propanoate: R79, Y142, and H175. N-formimidoyl-L-glutamate is bound at residue Y142. A Fe(3+)-binding site is contributed by H238. Zn(2+) is bound at residue H238. Position 241 (Q241) interacts with 4-imidazolone-5-propanoate. Residue D313 coordinates Fe(3+). D313 serves as a coordination point for Zn(2+). N315 and G317 together coordinate N-formimidoyl-L-glutamate. Position 318 (T318) interacts with 4-imidazolone-5-propanoate.

Belongs to the metallo-dependent hydrolases superfamily. HutI family. It depends on Zn(2+) as a cofactor. The cofactor is Fe(3+).

The protein resides in the cytoplasm. It carries out the reaction 4-imidazolone-5-propanoate + H2O = N-formimidoyl-L-glutamate. It participates in amino-acid degradation; L-histidine degradation into L-glutamate; N-formimidoyl-L-glutamate from L-histidine: step 3/3. Functionally, catalyzes the hydrolytic cleavage of the carbon-nitrogen bond in imidazolone-5-propanoate to yield N-formimidoyl-L-glutamate. It is the third step in the universal histidine degradation pathway. The sequence is that of Imidazolonepropionase from Xanthomonas campestris pv. campestris (strain 8004).